The following is a 496-amino-acid chain: uncharacterized protein (496 aa).

A run of 12 helical transmembrane segments spans residues Phe-33–Ala-53, Leu-89–Ile-109, Pro-127–Phe-147, Val-154–Phe-174, Leu-193–Val-213, Ile-247–Phe-267, Leu-285–Tyr-305, Leu-320–Phe-340, Leu-355–Phe-375, Ser-382–Phe-402, Leu-411–Phe-431, and Val-455–Ile-475.

The protein resides in the cell membrane. This is an uncharacterized protein from Ureaplasma parvum serovar 3 (strain ATCC 700970).